The primary structure comprises 227 residues: Germin-like protein 3-3 (227 aa).

Residues 1 to 26 (MECFKTTLAGVVLVVLLLQQAPVLRA) form the signal peptide. An intrachain disulfide couples Cys36 to Cys51. Positions 65-217 (SRLATGGDVN…ALRVDAGVVE (153 aa)) constitute a Cupin type-1 domain. N-linked (GlcNAc...) asparagine glycosylation is found at Asn78 and Asn81. Residues His114, His116, Glu121, and His163 each coordinate Mn(2+).

This sequence belongs to the germin family. Oligomer (believed to be a pentamer but probably hexamer).

Its subcellular location is the secreted. It localises to the extracellular space. The protein resides in the apoplast. In terms of biological role, may play a role in plant defense. Probably has no oxalate oxidase activity even if the active site is conserved. In Oryza sativa subsp. japonica (Rice), this protein is Germin-like protein 3-3.